Here is a 717-residue protein sequence, read N- to C-terminus: Polyribonucleotide nucleotidyltransferase (717 aa).

Mg(2+)-binding residues include aspartate 496 and aspartate 502. The region spanning 563–622 (PRLLTIKIDPDLIGLVIGPGGKTVKGITEQTGTKIDIDDDGTVTISSTDGEQAEKAKRLI) is the KH domain. Positions 632 to 700 (GEVYLGRVTR…SKGRLNLTRL (69 aa)) constitute an S1 motif domain.

This sequence belongs to the polyribonucleotide nucleotidyltransferase family. The cofactor is Mg(2+).

The protein localises to the cytoplasm. The catalysed reaction is RNA(n+1) + phosphate = RNA(n) + a ribonucleoside 5'-diphosphate. Functionally, involved in mRNA degradation. Catalyzes the phosphorolysis of single-stranded polyribonucleotides processively in the 3'- to 5'-direction. In Microcystis aeruginosa (strain NIES-843 / IAM M-2473), this protein is Polyribonucleotide nucleotidyltransferase.